We begin with the raw amino-acid sequence, 80 residues long: UPF0154 protein SaurJH1_1431 (80 aa).

Residues 4–24 (WLAIIFIVAALILGLIGGFLL) form a helical membrane-spanning segment.

Belongs to the UPF0154 family.

The protein localises to the cell membrane. This Staphylococcus aureus (strain JH1) protein is UPF0154 protein SaurJH1_1431.